The chain runs to 266 residues: NADP-dependent mannitol dehydrogenase (266 aa).

N107 and K140 together coordinate NADP(+). The active-site Proton donor is the S159. Residues Y174, K178, I206, and T208 each coordinate NADP(+). The active-site Proton acceptor is Y174. The active-site Lowers pKa of active site Tyr is the K178.

Belongs to the short-chain dehydrogenases/reductases (SDR) family. In terms of assembly, homotetramer.

It catalyses the reaction D-mannitol + NADP(+) = D-fructose + NADPH + H(+). In terms of biological role, catalyzes the interconversion between D-mannitol and D-fructose. Plays a key role in liamocins biosynthesis by providing the mannitol moity that is linked to 3,5-dihydroxydecanoic acid (provided by the HR-PKS PKS1) via ester bond formation catalyzed by the esterase EST1. The protein is NADP-dependent mannitol dehydrogenase of Aureobasidium melanogenum (Aureobasidium pullulans var. melanogenum).